Consider the following 347-residue polypeptide: Beta carbonic anhydrase 1, chloroplastic (347 aa).

A chloroplast-targeting transit peptide spans 1-113; that stretch reads MSTAPLSGFF…AAAKVEQITA (113 aa). The residue at position 114 (Ala-114) is an N-acetylalanine. Ser-175 carries the post-translational modification Phosphoserine. Residue Tyr-203 is modified to Phosphotyrosine. Residue Ser-266 is modified to Phosphoserine. Cys-280 is subject to S-nitrosocysteine.

This sequence belongs to the beta-class carbonic anhydrase family. As to quaternary structure, homohexamer. In terms of processing, S-nitrosylation at Cys-280 is up-regulated during nitrosative burst and suppresses both binding of salicylic acid and carbonic anhydrase activity. S-nitrosylated in response to an avirulent but not to a virulent bacterial strain. Strongly expressed in aerial tissues including leaves, stems, flowers and siliques. Accumulates in both guard cells and mesophyll cells.

It is found in the plastid. The protein resides in the chloroplast stroma. Its subcellular location is the cell membrane. It catalyses the reaction hydrogencarbonate + H(+) = CO2 + H2O. Its function is as follows. Reversible hydration of carbon dioxide. Required for photosynthesis in cotyledons. Binds salicylic acid. Together with BCA4, involved in the CO(2) signaling pathway which controls gas-exchange between plants and the atmosphere by modulating stomatal development and movements. Promotes water use efficiency. The chain is Beta carbonic anhydrase 1, chloroplastic from Arabidopsis thaliana (Mouse-ear cress).